Consider the following 89-residue polypeptide: Small ribosomal subunit protein uS15 (89 aa).

This sequence belongs to the universal ribosomal protein uS15 family. In terms of assembly, part of the 30S ribosomal subunit. Forms a bridge to the 50S subunit in the 70S ribosome, contacting the 23S rRNA.

Functionally, one of the primary rRNA binding proteins, it binds directly to 16S rRNA where it helps nucleate assembly of the platform of the 30S subunit by binding and bridging several RNA helices of the 16S rRNA. In terms of biological role, forms an intersubunit bridge (bridge B4) with the 23S rRNA of the 50S subunit in the ribosome. The protein is Small ribosomal subunit protein uS15 of Anaeromyxobacter sp. (strain Fw109-5).